The chain runs to 166 residues: MINALGLLEVDGMVAAIDAADAMLKAANVRLLSHEVLDPGRLTLVVEGDLAACRAALDAGCAAAMRTGRVISRKEIGRPDDDTQWLVTGFNRQPKQPVREPDAPVIVAESADELLALLTSVRQGMTAGEVAAHFGWPLEKARNALEQLFSAGTLRKRSSRYRLKPH.

The BMC domain maps to 4–88 (ALGLLEVDGM…PDDDTQWLVT (85 aa)). One can recognise a EutK-Ctail domain in the interval 109–165 (ESADELLALLTSVRQGMTAGEVAAHFGWPLEKARNALEQLFSAGTLRKRSSRYRLKP).

The protein belongs to the bacterial microcompartments protein family. Monomeric in solution.

The protein localises to the bacterial microcompartment. It participates in amine and polyamine degradation; ethanolamine degradation. Functionally, probably a minor component of the bacterial microcompartment (BMC) shell dedicated to ethanolamine degradation. It might bind nucleic acids. This is Bacterial microcompartment shell protein EutK (eutK) from Escherichia coli (strain K12).